The sequence spans 709 residues: DNA ligase (709 aa).

NAD(+) is bound by residues 34–38 (DAEYD), 83–84 (SL), and glutamate 115. Catalysis depends on lysine 117, which acts as the N6-AMP-lysine intermediate. 4 residues coordinate NAD(+): arginine 138, glutamate 185, lysine 301, and lysine 325. Zn(2+)-binding residues include cysteine 419, cysteine 422, cysteine 437, and cysteine 443. Residues 602–691 (RQSDTLAGKT…AEPPPSPPPP (90 aa)) form the BRCT domain. Residues 679–709 (GTTAEPPPSPPPPPPETNTDGNQLLLPLDGE) form a disordered region. A compositionally biased stretch (pro residues) spans 683 to 694 (EPPPSPPPPPPE).

Belongs to the NAD-dependent DNA ligase family. LigA subfamily. It depends on Mg(2+) as a cofactor. Requires Mn(2+) as cofactor.

The catalysed reaction is NAD(+) + (deoxyribonucleotide)n-3'-hydroxyl + 5'-phospho-(deoxyribonucleotide)m = (deoxyribonucleotide)n+m + AMP + beta-nicotinamide D-nucleotide.. In terms of biological role, DNA ligase that catalyzes the formation of phosphodiester linkages between 5'-phosphoryl and 3'-hydroxyl groups in double-stranded DNA using NAD as a coenzyme and as the energy source for the reaction. It is essential for DNA replication and repair of damaged DNA. The polypeptide is DNA ligase (Chloroflexus aurantiacus (strain ATCC 29364 / DSM 637 / Y-400-fl)).